The primary structure comprises 87 residues: Small ribosomal subunit protein uS15c (87 aa).

This sequence belongs to the universal ribosomal protein uS15 family. Part of the 30S ribosomal subunit.

The protein resides in the plastid. Its subcellular location is the chloroplast. This chain is Small ribosomal subunit protein uS15c (rps15), found in Solanum bulbocastanum (Wild potato).